The chain runs to 26 residues: GTP-binding protein Rheb (26 aa).

GTP-binding residues include Ser1, Ser2, Val13, Tyr16, and Thr19. Ser1 provides a ligand contact to Mg(2+). The Effector region motif lies at Tyr16 to Phe24. Thr19 is a Mg(2+) binding site.

The protein belongs to the small GTPase superfamily. Rheb family.

The enzyme catalyses GTP + H2O = GDP + phosphate + H(+). Binds GTP and exhibits intrinsic GTPase activity. This chain is GTP-binding protein Rheb, found in Crocodylus siamensis (Siamese crocodile).